The primary structure comprises 39 residues: Potassium channel toxin alpha-KTx 2.2 (39 aa).

3 disulfides stabilise this stretch: cysteine 7–cysteine 29, cysteine 13–cysteine 34, and cysteine 17–cysteine 36. The segment at 37–39 is interaction with Kv1.3 channels; it reads YPH.

This sequence belongs to the short scorpion toxin superfamily. Potassium channel inhibitor family. Alpha-KTx 02 subfamily. Expressed by the venom gland.

The protein localises to the secreted. In terms of biological role, potent inhibitor of voltage-gated potassium channels such as Kv1.1/KCNA1 (IC(50)=0.144 nM), Kv1.2/KCNA2 (IC(50)=0.675 nM), Kv1.3/KCNA3 (IC(50)=0.23 nM) and Shaker (Kd=160 nM). Suppresses expression of the Kv1.3/KCNA3 channel in lipopolysaccharide (LPS)-stimulated mouse macrophages. Down-regulates secretion of nitric oxide (NO) and inflammatory cytokines, such as TNF-alpha/TNF, IL-1beta/IL1B and IL6, in LPS-stimulated mouse macrophages in a manner dependent on Kv1.3/KCNA3 channel blockage. Reduces activation of MAPK and NF-kappa-B signaling pathways in LPS-stimulated mouse macrophages. Modulates intracellular Ca(2+) signaling in human PMA/ionomycin-triggered T-cells. Interferes with the activation of the MAPK, NF-kappa-B and NFATc1 pathways in human PMA/ionomycin-triggered T-cells. Reduces proliferation of human PMA/ionomycin-triggered T-cells. Down-regulates secretion of cytokines, such as TNF-alpha/TNF and IL2, in human PMA/ionomycin-triggered T-cells. The chain is Potassium channel toxin alpha-KTx 2.2 from Centruroides margaritatus (Central American bark Scorpion).